Consider the following 363-residue polypeptide: 2,5-diketocamphane 1,2-monooxygenase 1 (363 aa).

FMN-binding positions include M74 and 186–194; that span reads TGLTKNSSS.

This sequence belongs to the bacterial luciferase oxidoreductase family. As to quaternary structure, homodimer. Likely forms a loose transient complex with a P.putida flavin reductase that provides the required FMNH(2) to the enzyme.

It catalyses the reaction (1R,4R)-bornane-2,5-dione + FMNH2 + O2 = (1R,4R)-5-oxo-1,2-campholide + FMN + H2O + H(+). Its pathway is terpene metabolism; (R)-camphor degradation. Involved in the degradation and assimilation of (+)-camphor, which allows P.putida strain NCIMB 10007 to grow on this enantiomer of camphor as the sole carbon source. Catalyzes the FMNH(2)-dependent lactonization of 2,5-diketocamphane via a Baeyer-Villiger oxidation to produce the unstable lactone 5-oxo-1,2-campholide with (R,R) configuration, that presumably undergoes spontaneous hydrolysis to form 2-oxo-Delta(3)-4,5,5-trimethylcyclopentenylacetate. Is also able to convert (+)-camphor and norcamphor to the corresponding lactone in vitro. Shows no conversion of (-)-camphor, (+)-fenchone, (-)-fenchone, and (+)-nopinone. Acts only on bicyclic ketones; is not active towards monocyclic ketones, aromatic ketones, the aliphatic 2-decanone, 1-indanone and progesterone. In Pseudomonas putida (Arthrobacter siderocapsulatus), this protein is 2,5-diketocamphane 1,2-monooxygenase 1.